A 412-amino-acid polypeptide reads, in one-letter code: Proteasome-activating nucleotidase 2 (412 aa).

Residues 28–74 (LRQHFERMVDVNRELDQRLQNADDRHAELVDEVDQMKARNEALKTAS) are a coiled coil. Residues 196 to 201 (GTGKTM) and H335 each bind ATP. The tract at residues 409 to 412 (DYQY) is docks into pockets in the proteasome alpha-ring to cause gate opening.

This sequence belongs to the AAA ATPase family. As to quaternary structure, homohexamer. The hexameric complex has a two-ring architecture resembling a top hat that caps the 20S proteasome core at one or both ends. Upon ATP-binding, the C-terminus of PAN interacts with the alpha-rings of the proteasome core by binding to the intersubunit pockets.

The protein resides in the cytoplasm. Its function is as follows. ATPase which is responsible for recognizing, binding, unfolding and translocation of substrate proteins into the archaeal 20S proteasome core particle. Is essential for opening the gate of the 20S proteasome via an interaction with its C-terminus, thereby allowing substrate entry and access to the site of proteolysis. Thus, the C-termini of the proteasomal ATPase function like a 'key in a lock' to induce gate opening and therefore regulate proteolysis. Unfolding activity requires energy from ATP hydrolysis, whereas ATP binding alone promotes ATPase-20S proteasome association which triggers gate opening, and supports translocation of unfolded substrates. The chain is Proteasome-activating nucleotidase 2 from Haloferax volcanii (strain ATCC 29605 / DSM 3757 / JCM 8879 / NBRC 14742 / NCIMB 2012 / VKM B-1768 / DS2) (Halobacterium volcanii).